The following is a 245-amino-acid chain: 4-hydroxy-tetrahydrodipicolinate reductase (245 aa).

NAD(+) is bound by residues 7-12 (GARGKV), 75-77 (GTT), and 102-105 (APNF). H132 functions as the Proton donor/acceptor in the catalytic mechanism. H133 serves as a coordination point for (S)-2,3,4,5-tetrahydrodipicolinate. K136 acts as the Proton donor in catalysis. 142–143 (GT) is a binding site for (S)-2,3,4,5-tetrahydrodipicolinate.

The protein belongs to the DapB family.

The protein resides in the cytoplasm. The enzyme catalyses (S)-2,3,4,5-tetrahydrodipicolinate + NAD(+) + H2O = (2S,4S)-4-hydroxy-2,3,4,5-tetrahydrodipicolinate + NADH + H(+). It carries out the reaction (S)-2,3,4,5-tetrahydrodipicolinate + NADP(+) + H2O = (2S,4S)-4-hydroxy-2,3,4,5-tetrahydrodipicolinate + NADPH + H(+). The protein operates within amino-acid biosynthesis; L-lysine biosynthesis via DAP pathway; (S)-tetrahydrodipicolinate from L-aspartate: step 4/4. Functionally, catalyzes the conversion of 4-hydroxy-tetrahydrodipicolinate (HTPA) to tetrahydrodipicolinate. In Mycolicibacterium smegmatis (strain ATCC 700084 / mc(2)155) (Mycobacterium smegmatis), this protein is 4-hydroxy-tetrahydrodipicolinate reductase.